The primary structure comprises 160 residues: Urease accessory protein UreE (160 aa).

The protein belongs to the UreE family.

The protein localises to the cytoplasm. Its function is as follows. Involved in urease metallocenter assembly. Binds nickel. Probably functions as a nickel donor during metallocenter assembly. This chain is Urease accessory protein UreE, found in Acinetobacter baumannii (strain ACICU).